The primary structure comprises 277 residues: Caspase-3 (277 aa).

The residue at position 1 (Met-1) is an N-acetylmethionine. 2 propeptides span residues 1 to 9 and 10 to 28; these read MENNKTSVD and SKSIKTLETKILHGSKSMD. At Lys-11 the chain carries N6-acetyllysine. A Phosphoserine modification is found at Ser-26. Residues His-121 and Cys-163 contribute to the active site. An S-nitrosocysteine; in inhibited form modification is found at Cys-163.

This sequence belongs to the peptidase C14A family. In terms of assembly, heterotetramer that consists of two anti-parallel arranged heterodimers, each one formed by a 17 kDa (p17) and a 12 kDa (p12) subunit. Interacts with BIRC6/bruce. As to quaternary structure, (Microbial infection) Subunit p17 interacts with African swine fever virus (ASFV) inhibitor of apoptosis protein. In terms of processing, cleavage by granzyme B, caspase-6, caspase-8 and caspase-10 generates the two active subunits. Additional processing of the propeptides is likely due to the autocatalytic activity of the activated protease. Active heterodimers between the small subunit of caspase-7 protease and the large subunit of caspase-3 also occur and vice versa. Post-translationally, S-nitrosylated on its catalytic site cysteine in unstimulated cell lines and denitrosylated upon activation of the Fas apoptotic pathway, associated with an increase in intracellular caspase activity. Fas therefore activates caspase-3 not only by inducing the cleavage of the caspase zymogen to its active subunits, but also by stimulating the denitrosylation of its active site thiol. Ubiquitinated by BIRC6; this activity is inhibited by DIABLO/SMAC.

It is found in the cytoplasm. It catalyses the reaction Strict requirement for an Asp residue at positions P1 and P4. It has a preferred cleavage sequence of Asp-Xaa-Xaa-Asp-|- with a hydrophobic amino-acid residue at P2 and a hydrophilic amino-acid residue at P3, although Val or Ala are also accepted at this position.. Its activity is regulated as follows. Inhibited by BIRC6; following inhibition of BIRC6-caspase binding by DIABLO/SMAC, BIRC6 is subjected to caspase cleavage, leading to an increase in active caspases. Functionally, involved in the activation cascade of caspases responsible for apoptosis execution. At the onset of apoptosis, it proteolytically cleaves poly(ADP-ribose) polymerase PARP1 at a '216-Asp-|-Gly-217' bond. Cleaves and activates sterol regulatory element binding proteins (SREBPs) between the basic helix-loop-helix leucine zipper domain and the membrane attachment domain. Cleaves and activates caspase-6, -7 and -9 (CASP6, CASP7 and CASP9, respectively). Cleaves and inactivates interleukin-18 (IL18). Triggers cell adhesion in sympathetic neurons through RET cleavage. Cleaves IL-1 beta between an Asp and an Ala, releasing the mature cytokine which is involved in a variety of inflammatory processes. Cleaves and inhibits serine/threonine-protein kinase AKT1 in response to oxidative stress. Acts as an inhibitor of type I interferon production during virus-induced apoptosis by mediating cleavage of antiviral proteins CGAS, IRF3 and MAVS, thereby preventing cytokine overproduction. Also involved in pyroptosis by mediating cleavage and activation of gasdermin-E (GSDME). Cleaves XRCC4 and phospholipid scramblase proteins XKR4, XKR8 and XKR9, leading to promote phosphatidylserine exposure on apoptotic cell surface. Cleaves BIRC6 following inhibition of BIRC6-caspase binding by DIABLO/SMAC. This Sus scrofa (Pig) protein is Caspase-3 (CASP3).